The following is a 267-amino-acid chain: Glucosamine-6-phosphate deaminase (267 aa).

Asp-72 (proton acceptor; for enolization step) is an active-site residue. Catalysis depends on Asp-141, which acts as the For ring-opening step. The active-site Proton acceptor; for ring-opening step is His-143. The active-site For ring-opening step is Glu-148.

The protein belongs to the glucosamine/galactosamine-6-phosphate isomerase family. NagB subfamily.

It catalyses the reaction alpha-D-glucosamine 6-phosphate + H2O = beta-D-fructose 6-phosphate + NH4(+). Its pathway is amino-sugar metabolism; N-acetylneuraminate degradation; D-fructose 6-phosphate from N-acetylneuraminate: step 5/5. Allosterically activated by N-acetylglucosamine 6-phosphate (GlcNAc6P). Catalyzes the reversible isomerization-deamination of glucosamine 6-phosphate (GlcN6P) to form fructose 6-phosphate (Fru6P) and ammonium ion. This Borrelia hermsii (strain HS1 / DAH) protein is Glucosamine-6-phosphate deaminase.